The sequence spans 206 residues: Ribosomal RNA small subunit methyltransferase G (206 aa).

S-adenosyl-L-methionine is bound by residues G74, L79, 125-126, and R140; that span reads VE.

It belongs to the methyltransferase superfamily. RNA methyltransferase RsmG family.

It is found in the cytoplasm. The enzyme catalyses guanosine(527) in 16S rRNA + S-adenosyl-L-methionine = N(7)-methylguanosine(527) in 16S rRNA + S-adenosyl-L-homocysteine. In terms of biological role, specifically methylates the N7 position of guanine in position 527 of 16S rRNA. This is Ribosomal RNA small subunit methyltransferase G from Shewanella woodyi (strain ATCC 51908 / MS32).